The sequence spans 440 residues: Transposon Ty1-ER2 Gag polyprotein (440 aa).

Composition is skewed to polar residues over residues 1 to 10 (MESQQLSNYP), 48 to 60 (TKAN…TPAS), and 127 to 152 (QSQF…GNTF). 3 disordered regions span residues 1-93 (MESQ…MMTQ), 126-173 (PQSQ…RPPP), and 352-440 (GSRN…PETY). The segment covering 153–165 (TDSSSADSDMTST) has biased composition (low complexity). The RNA-binding stretch occupies residues 299-401 (NNGIHINNKV…NSKSKTARAH (103 aa)). A compositionally biased stretch (low complexity) spans 402–418 (NVSTSNNSPSTDNDSIS). Phosphoserine is present on Ser-416. The segment covering 419 to 428 (KSTTEPIQLN) has biased composition (polar residues). Residues 429 to 440 (NKHDLHLRPETY) are compositionally biased toward basic and acidic residues.

In terms of assembly, homotrimer.

It is found in the cytoplasm. Functionally, capsid protein (CA) is the structural component of the virus-like particle (VLP), forming the shell that encapsulates the retrotransposons dimeric RNA genome. The particles are assembled from trimer-clustered units and there are holes in the capsid shells that allow for the diffusion of macromolecules. CA also has nucleocapsid-like chaperone activity, promoting primer tRNA(i)-Met annealing to the multipartite primer-binding site (PBS), dimerization of Ty1 RNA and initiation of reverse transcription. The sequence is that of Transposon Ty1-ER2 Gag polyprotein (TY1A-ER2) from Saccharomyces cerevisiae (strain ATCC 204508 / S288c) (Baker's yeast).